The chain runs to 92 residues: MGRSLKKGPFVDDHLMKKVEVQEASEKKQVIKTWSRRSTIFPNFIGLTIAVYDGRKHVPVYVTEDMVGHKLGEFAPTRTYKGHGADDKKTRR.

It belongs to the universal ribosomal protein uS19 family.

Functionally, protein S19 forms a complex with S13 that binds strongly to the 16S ribosomal RNA. The sequence is that of Small ribosomal subunit protein uS19 from Lysinibacillus sphaericus (strain C3-41).